We begin with the raw amino-acid sequence, 79 residues long: MSDIEARVKKIIAEQLGVAEGEVTNEKAFVADLGADSLDTVELVMALEDEFSIEIPDEEAEKITTVQLAIDYAKSHAKA.

One can recognise a Carrier domain in the interval 2–77 (SDIEARVKKI…LAIDYAKSHA (76 aa)). O-(pantetheine 4'-phosphoryl)serine is present on Ser-37.

This sequence belongs to the acyl carrier protein (ACP) family. 4'-phosphopantetheine is transferred from CoA to a specific serine of apo-ACP by AcpS. This modification is essential for activity because fatty acids are bound in thioester linkage to the sulfhydryl of the prosthetic group.

It is found in the cytoplasm. Its pathway is lipid metabolism; fatty acid biosynthesis. Functionally, carrier of the growing fatty acid chain in fatty acid biosynthesis. The polypeptide is Acyl carrier protein (Methylibium petroleiphilum (strain ATCC BAA-1232 / LMG 22953 / PM1)).